We begin with the raw amino-acid sequence, 182 residues long: uncharacterized protein (182 aa).

Its subcellular location is the plastid. The protein resides in the cyanelle. This is an uncharacterized protein from Cyanophora paradoxa.